Here is a 129-residue protein sequence, read N- to C-terminus: M-zodatoxin-Lt8l (129 aa).

The signal sequence occupies residues M1–S20. A propeptide spanning residues K21–R60 is cleaved from the precursor.

It belongs to the cationic peptide 06 (cytoinsectotoxin) family. Expressed by the venom gland.

It is found in the secreted. In terms of biological role, insecticidal, cytolytic and antimicrobial peptide. Forms voltage-dependent, ion-permeable channels in membranes. At high concentration causes cell membrane lysis. The protein is M-zodatoxin-Lt8l (cit 1-12) of Lachesana tarabaevi (Spider).